A 205-amino-acid polypeptide reads, in one-letter code: Small ribosomal subunit protein uS4 (205 aa).

Residues Asn-18–Leu-45 form a disordered region. The S4 RNA-binding domain maps to Arg-94–Ser-157.

The protein belongs to the universal ribosomal protein uS4 family. In terms of assembly, part of the 30S ribosomal subunit. Contacts protein S5. The interaction surface between S4 and S5 is involved in control of translational fidelity.

Functionally, one of the primary rRNA binding proteins, it binds directly to 16S rRNA where it nucleates assembly of the body of the 30S subunit. Its function is as follows. With S5 and S12 plays an important role in translational accuracy. This Rhodopseudomonas palustris (strain BisA53) protein is Small ribosomal subunit protein uS4.